The following is a 155-amino-acid chain: V-type proton ATPase 16 kDa proteolipid subunit c (155 aa).

At 1-10 (MSEAKNGPEY) the chain is on the lumenal side. The chain crosses the membrane as a helical span at residues 11-33 (ASFFAVMGASAAMVFSALGAAYG). Topologically, residues 34–55 (TAKSGTGIAAMSVMRPEMIMKS) are cytoplasmic. The chain crosses the membrane as a helical span at residues 56–76 (IIPVVMAGIIAIYGLVVAVLI). Over 77 to 92 (ANSLNDGISLYRSFLQ) the chain is Lumenal. A helical transmembrane segment spans residues 93 to 114 (LGAGLSVGLSGLAAGFAIGIVG). At 115–131 (DAGVRGTAQQPRLFVGM) the chain is on the cytoplasmic side. The helical transmembrane segment at 132–152 (ILILIFAEVLGLYGLIVALIL) threads the bilayer. Residues 153-155 (STK) are Lumenal-facing.

It belongs to the V-ATPase proteolipid subunit family. In terms of assembly, V-ATPase is a heteromultimeric enzyme made up of two complexes: the ATP-hydrolytic V1 complex and the proton translocation V0 complex. The V1 complex consists of three catalytic AB heterodimers that form a heterohexamer, three peripheral stalks each consisting of EG heterodimers, one central rotor including subunits D and F, and the regulatory subunits C and H. The proton translocation complex V0 consists of the proton transport subunit a, a ring of proteolipid subunits c9c'', rotary subunit d, subunits e and f, and the accessory subunits ATP6AP1/Ac45 and ATP6AP2/PRR. Interacts with the V0 complex V-ATPase subunit a4 ATP6V0A4. Interacts with LASS2. Interacts with RNF182; this interaction leads to ubiquitination and degradation via the proteasome pathway. In terms of processing, ubiquitinated by RNF182, leading to its degradation via the ubiquitin-proteasome pathway. In terms of tissue distribution, expressed in brain (at protein level).

It is found in the cytoplasmic vesicle. Its subcellular location is the clathrin-coated vesicle membrane. The protein resides in the secretory vesicle. It localises to the synaptic vesicle membrane. Its function is as follows. Proton-conducting pore forming subunit of the V0 complex of vacuolar(H+)-ATPase (V-ATPase), a multisubunit enzyme composed of a peripheral complex (V1) that hydrolyzes ATP and a membrane integral complex (V0) that translocates protons. V-ATPase is responsible for acidifying and maintaining the pH of intracellular compartments and in some cell types, is targeted to the plasma membrane, where it is responsible for acidifying the extracellular environment. The protein is V-type proton ATPase 16 kDa proteolipid subunit c (ATP6V0C) of Bos taurus (Bovine).